A 77-amino-acid polypeptide reads, in one-letter code: Homeodomain-only protein (77 aa).

A DNA-binding region (homeobox; degenerate) is located at residues 7-65; that stretch reads AALGVRLTEDQVKVLEENFTKVSKHPDETTLMLIAAECGLSEEQTAVWFRMRNAQWRKA.

The protein resides in the nucleus. Its subcellular location is the cytoplasm. Atypical homeodomain protein which does not bind DNA and is required to modulate cardiac growth and development. May act via an interaction with SRF, leading to modulate the expression of SRF-dependent cardiac-specific genes and cardiac development. May act as a co-chaperone for HSPA1A and HSPA1B chaperone proteins and assist in chaperone-mediated protein refolding. The protein is Homeodomain-only protein (hopx) of Danio rerio (Zebrafish).